The chain runs to 394 residues: NAD(P)H-quinone oxidoreductase subunit H (394 aa).

Belongs to the complex I 49 kDa subunit family. In terms of assembly, NDH-1 can be composed of about 15 different subunits; different subcomplexes with different compositions have been identified which probably have different functions.

Its subcellular location is the cellular thylakoid membrane. It catalyses the reaction a plastoquinone + NADH + (n+1) H(+)(in) = a plastoquinol + NAD(+) + n H(+)(out). It carries out the reaction a plastoquinone + NADPH + (n+1) H(+)(in) = a plastoquinol + NADP(+) + n H(+)(out). Its function is as follows. NDH-1 shuttles electrons from an unknown electron donor, via FMN and iron-sulfur (Fe-S) centers, to quinones in the respiratory and/or the photosynthetic chain. The immediate electron acceptor for the enzyme in this species is believed to be plastoquinone. Couples the redox reaction to proton translocation, and thus conserves the redox energy in a proton gradient. Cyanobacterial NDH-1 also plays a role in inorganic carbon-concentration. The chain is NAD(P)H-quinone oxidoreductase subunit H from Prochlorococcus marinus (strain NATL1A).